We begin with the raw amino-acid sequence, 296 residues long: Peptide transport system permease protein SapC (296 aa).

Over 1-28 (MPYDSVYSEKRPPGTLRTAWRKFYSDAP) the chain is Cytoplasmic. The chain crosses the membrane as a helical span at residues 29–49 (AMVGLYGCAGLALLCIFGGWI). Residues 50–98 (APYGIDQQFLGYQLLPPSWSRYGEVSFFLGTDDLGRDVLSRLLSGAAPT) lie on the Periplasmic side of the membrane. The chain crosses the membrane as a helical span at residues 99–119 (VGGAFIVTLAATLCGLVLGVV). Residues 99-284 (VGGAFIVTLA…LSVLLVNLLG (186 aa)) form the ABC transmembrane type-1 domain. The Cytoplasmic portion of the chain corresponds to 120 to 133 (AGATHGLRSAVLNH). Residues 134–154 (ILDTLLSIPSLLLAIIVVAFA) form a helical membrane-spanning segment. The Periplasmic portion of the chain corresponds to 155-196 (GPHLSHAMFAVWLALLPRMVRSVYSMVHDELEKEYVIAARLD). Residues 197 to 217 (GATTLNILWFAILPNITAGLV) traverse the membrane as a helical segment. At 218–222 (TEITR) the chain is on the cytoplasmic side. The helical transmembrane segment at 223 to 243 (ALSMAILDIAALGFLDLGAQL) threads the bilayer. At 244–257 (PSPEWGAMLGDALE) the chain is on the periplasmic side. The helical transmembrane segment at 258–278 (LIYVAPWTVMLPGAAITLSVL) threads the bilayer. Residues 279-296 (LVNLLGDGIRRAIIAGVE) are Cytoplasmic-facing.

This sequence belongs to the binding-protein-dependent transport system permease family. OppBC subfamily.

Its subcellular location is the cell inner membrane. Involved in a peptide intake transport system that plays a role in the resistance to antimicrobial peptides. In Salmonella typhi, this protein is Peptide transport system permease protein SapC (sapC).